Consider the following 96-residue polypeptide: NADH-ubiquinone oxidoreductase chain 4L (96 aa).

The next 3 helical transmembrane spans lie at 2-22 (IMIL…FCFV), 28-48 (LLSM…MLFI), and 62-82 (MFLT…VSMI).

Belongs to the complex I subunit 4L family.

The protein localises to the mitochondrion membrane. The catalysed reaction is a ubiquinone + NADH + 5 H(+)(in) = a ubiquinol + NAD(+) + 4 H(+)(out). In terms of biological role, core subunit of the mitochondrial membrane respiratory chain NADH dehydrogenase (Complex I) that is believed to belong to the minimal assembly required for catalysis. Complex I functions in the transfer of electrons from NADH to the respiratory chain. The immediate electron acceptor for the enzyme is believed to be ubiquinone. This is NADH-ubiquinone oxidoreductase chain 4L (mt:ND4L) from Drosophila melanogaster (Fruit fly).